Consider the following 101-residue polypeptide: uncharacterized protein (101 aa).

The N-terminal stretch at 1 to 24 (MILMFRMNKGMSFITLLFSLALFS) is a signal peptide.

This is an uncharacterized protein from Haemophilus influenzae (strain ATCC 51907 / DSM 11121 / KW20 / Rd).